Consider the following 478-residue polypeptide: Ankyrin repeat and BTB/POZ domain-containing protein 1 (478 aa).

2 ANK repeats span residues 1–31 (MDTS…EVNV) and 35–64 (WDST…RCEA). BTB domains are found at residues 115–182 (SDVV…DIGV) and 272–346 (PDIC…ELSP). A coiled-coil region spans residues 451 to 477 (VQTYSAIEEAQQRLRALEDLLVSIGLD).

In terms of tissue distribution, ubiquitously expressed in all fetal tissues examined including heart, brain, liver, and kidney. Also expressed at lower levels in both adult heart and hypertrophic heart.

It is found in the cytoplasm. Its function is as follows. May act as a mediator of the PTEN growth-suppressive signaling pathway. May play a role in developmental processes. This is Ankyrin repeat and BTB/POZ domain-containing protein 1 from Homo sapiens (Human).